The following is a 366-amino-acid chain: Phospho-N-acetylmuramoyl-pentapeptide-transferase (366 aa).

Transmembrane regions (helical) follow at residues 27-47 (AALFTSALIVFLFGPAMIASL), 71-91 (TPTMGGLMILTGIVVSSLLWA), 93-113 (LSSIYVVSTLLVTLGFGAIGF), 138-158 (FVIAAVAVFFMMQAALSAGAA), 174-194 (LMLNLGYFFVLFGGFVIVGAG), 205-225 (GLAIVPVMIASAAFGLIAYLA), 245-265 (LAVILGAVIGAGLGFLWFNAP), 268-288 (AIFMGDTGSLALGGLIGTVAV), 297-317 (IIIGGLFVIETLSVIIQVFWF), and 343-363 (QVVIRFWIIAVILAMVGLSTL).

This sequence belongs to the glycosyltransferase 4 family. MraY subfamily. Mg(2+) is required as a cofactor.

The protein resides in the cell inner membrane. The catalysed reaction is UDP-N-acetyl-alpha-D-muramoyl-L-alanyl-gamma-D-glutamyl-meso-2,6-diaminopimeloyl-D-alanyl-D-alanine + di-trans,octa-cis-undecaprenyl phosphate = di-trans,octa-cis-undecaprenyl diphospho-N-acetyl-alpha-D-muramoyl-L-alanyl-D-glutamyl-meso-2,6-diaminopimeloyl-D-alanyl-D-alanine + UMP. Its pathway is cell wall biogenesis; peptidoglycan biosynthesis. Its function is as follows. Catalyzes the initial step of the lipid cycle reactions in the biosynthesis of the cell wall peptidoglycan: transfers peptidoglycan precursor phospho-MurNAc-pentapeptide from UDP-MurNAc-pentapeptide onto the lipid carrier undecaprenyl phosphate, yielding undecaprenyl-pyrophosphoryl-MurNAc-pentapeptide, known as lipid I. The chain is Phospho-N-acetylmuramoyl-pentapeptide-transferase from Rhizobium meliloti (strain 1021) (Ensifer meliloti).